A 301-amino-acid polypeptide reads, in one-letter code: tRNA pseudouridine synthase B (301 aa).

Residue Asp-38 is the Nucleophile of the active site.

This sequence belongs to the pseudouridine synthase TruB family. Type 1 subfamily.

It carries out the reaction uridine(55) in tRNA = pseudouridine(55) in tRNA. Functionally, responsible for synthesis of pseudouridine from uracil-55 in the psi GC loop of transfer RNAs. The protein is tRNA pseudouridine synthase B of Limosilactobacillus reuteri (strain DSM 20016) (Lactobacillus reuteri).